Consider the following 123-residue polypeptide: SGSCTTKTCWTTLPKFRELGYILKDKYNEAVQVEPVRASRNKRPTFLKIKKPLSYRKPMDTDLVYIEKSPNYCEEDPVTGSVGTQGRMCNKTAQQSNGCDLMCCGRGYNTHQYSRVWQCNCKF.

Serine 1 carries the O-palmitoleoyl serine; by PORCN lipid modification. The disordered linker stretch occupies residues 33-61 (VEPVRASRNKRPTFLKIKKPLSYRKPMDT). Cysteine 89 and cysteine 104 are disulfide-bonded. N-linked (GlcNAc...) asparagine glycosylation is present at asparagine 90.

This sequence belongs to the Wnt family. Forms a soluble 1:1 complex with AFM; this prevents oligomerization and is required for prolonged biological activity. The complex with AFM may represent the physiological form in body fluids. Interacts with FZD5. Interacts with PORCN. Palmitoleoylation is required for efficient binding to frizzled receptors. Depalmitoleoylation leads to Wnt signaling pathway inhibition.

It localises to the secreted. Its subcellular location is the extracellular space. The protein localises to the extracellular matrix. In terms of biological role, ligand for members of the frizzled family of seven transmembrane receptors that functions in the canonical Wnt/beta-catenin signaling pathway. Plays an important role in embryonic development, including dorsal versus ventral patterning during limb development, skeleton development and urogenital tract development. Required for central nervous system (CNS) angiogenesis and blood-brain barrier regulation. This Meleagris gallopavo (Wild turkey) protein is Protein Wnt-7a (WNT7A).